Consider the following 338-residue polypeptide: RNA 3'-terminal phosphate cyclase (338 aa).

ATP is bound by residues Gln-103 and 283–287 (YLADQ). The active-site Tele-AMP-histidine intermediate is His-308.

Belongs to the RNA 3'-terminal cyclase family. Type 1 subfamily.

The protein localises to the cytoplasm. It catalyses the reaction a 3'-end 3'-phospho-ribonucleotide-RNA + ATP = a 3'-end 2',3'-cyclophospho-ribonucleotide-RNA + AMP + diphosphate. Catalyzes the conversion of 3'-phosphate to a 2',3'-cyclic phosphodiester at the end of RNA. The mechanism of action of the enzyme occurs in 3 steps: (A) adenylation of the enzyme by ATP; (B) transfer of adenylate to an RNA-N3'P to produce RNA-N3'PP5'A; (C) and attack of the adjacent 2'-hydroxyl on the 3'-phosphorus in the diester linkage to produce the cyclic end product. The biological role of this enzyme is unknown but it is likely to function in some aspects of cellular RNA processing. The protein is RNA 3'-terminal phosphate cyclase of Escherichia coli O6:K15:H31 (strain 536 / UPEC).